Reading from the N-terminus, the 388-residue chain is Mannitol-1-phosphate 5-dehydrogenase (388 aa).

Residue alanine 4–glycine 15 participates in NAD(+) binding.

This sequence belongs to the mannitol dehydrogenase family.

The enzyme catalyses D-mannitol 1-phosphate + NAD(+) = beta-D-fructose 6-phosphate + NADH + H(+). The chain is Mannitol-1-phosphate 5-dehydrogenase from Lactococcus lactis subsp. cremoris (strain MG1363).